The primary structure comprises 271 residues: Uridine-cytidine kinase 1-B (271 aa).

ATP is bound at residue Gly24 to Thr32. Substrate is bound by residues Asp81, Tyr109, His114, Arg163, Arg172, and Gln180. ATP is bound at residue Asp209. The disordered stretch occupies residues Arg240–His271. Over residues Leu246 to Gly259 the composition is skewed to low complexity. Residues Thr262–His271 are compositionally biased toward basic and acidic residues.

This sequence belongs to the uridine kinase family.

The catalysed reaction is uridine + ATP = UMP + ADP + H(+). The enzyme catalyses cytidine + ATP = CMP + ADP + H(+). It functions in the pathway pyrimidine metabolism; CTP biosynthesis via salvage pathway; CTP from cytidine: step 1/3. The protein operates within pyrimidine metabolism; UMP biosynthesis via salvage pathway; UMP from uridine: step 1/1. Functionally, phosphorylates uridine and cytidine to uridine monophosphate and cytidine monophosphate. Does not phosphorylate deoxyribonucleosides or purine ribonucleosides. Can use ATP or GTP as a phosphate donor. The protein is Uridine-cytidine kinase 1-B (uck1-b) of Xenopus laevis (African clawed frog).